The primary structure comprises 194 residues: Type II secretion system protein H (194 aa).

Residues 1-6 (MTATRG) constitute a propeptide, leader sequence. Residue F7 is modified to N-methylphenylalanine. A helical membrane pass occupies residues 12–32 (ILLVLVLVSASAVAVIATFPV).

It belongs to the GSP H family. As to quaternary structure, type II secretion is composed of four main components: the outer membrane complex, the inner membrane complex, the cytoplasmic secretion ATPase and the periplasm-spanning pseudopilus. Interacts with core component EpsG. In terms of processing, cleaved by prepilin peptidase. Methylated by prepilin peptidase at the amino group of the N-terminal phenylalanine once the leader sequence is cleaved by prepilin peptidase.

The protein resides in the cell inner membrane. Its function is as follows. Component of the type II secretion system required for the energy-dependent secretion of extracellular factors such as proteases and toxins from the periplasm. Part of the pseudopilus tip complex that is critical for the recognition and binding of secretion substrates. This is Type II secretion system protein H (epsH) from Vibrio cholerae serotype O1 (strain ATCC 39315 / El Tor Inaba N16961).